Consider the following 343-residue polypeptide: Branched-chain-amino-acid aminotransferase (343 aa).

Residue lysine 182 is modified to N6-(pyridoxal phosphate)lysine.

Belongs to the class-IV pyridoxal-phosphate-dependent aminotransferase family. The cofactor is pyridoxal 5'-phosphate.

It carries out the reaction L-leucine + 2-oxoglutarate = 4-methyl-2-oxopentanoate + L-glutamate. The enzyme catalyses L-isoleucine + 2-oxoglutarate = (S)-3-methyl-2-oxopentanoate + L-glutamate. The catalysed reaction is L-valine + 2-oxoglutarate = 3-methyl-2-oxobutanoate + L-glutamate. Its pathway is amino-acid biosynthesis; L-isoleucine biosynthesis; L-isoleucine from 2-oxobutanoate: step 4/4. The protein operates within amino-acid biosynthesis; L-leucine biosynthesis; L-leucine from 3-methyl-2-oxobutanoate: step 4/4. It functions in the pathway amino-acid biosynthesis; L-valine biosynthesis; L-valine from pyruvate: step 4/4. Acts on leucine, isoleucine and valine. This chain is Branched-chain-amino-acid aminotransferase (ilvE), found in Haemophilus influenzae (strain ATCC 51907 / DSM 11121 / KW20 / Rd).